The following is a 476-amino-acid chain: Lactate utilization protein B 1 (476 aa).

4Fe-4S ferredoxin-type domains lie at 301 to 331 (GTEF…GHAY) and 350 to 379 (YDEY…LHDL). [4Fe-4S] cluster contacts are provided by Cys-310, Cys-313, Cys-316, Cys-320, Cys-363, Cys-366, and Cys-370.

It belongs to the LutB/YkgF family.

Is involved in L-lactate degradation and allows cells to grow with lactate as the sole carbon source. Has probably a role as an electron transporter during oxidation of L-lactate. This Bacillus mycoides (strain KBAB4) (Bacillus weihenstephanensis) protein is Lactate utilization protein B 1.